A 126-amino-acid chain; its full sequence is Ribosome-binding factor A (126 aa).

Belongs to the RbfA family. As to quaternary structure, monomer. Binds 30S ribosomal subunits, but not 50S ribosomal subunits or 70S ribosomes.

The protein resides in the cytoplasm. Its function is as follows. One of several proteins that assist in the late maturation steps of the functional core of the 30S ribosomal subunit. Associates with free 30S ribosomal subunits (but not with 30S subunits that are part of 70S ribosomes or polysomes). Required for efficient processing of 16S rRNA. May interact with the 5'-terminal helix region of 16S rRNA. This is Ribosome-binding factor A from Histophilus somni (strain 129Pt) (Haemophilus somnus).